The sequence spans 155 residues: Ribosome maturation factor RimP (155 aa).

The protein belongs to the RimP family.

It localises to the cytoplasm. Functionally, required for maturation of 30S ribosomal subunits. This chain is Ribosome maturation factor RimP, found in Prochlorococcus marinus (strain SARG / CCMP1375 / SS120).